The primary structure comprises 373 residues: Queuine tRNA-ribosyltransferase (373 aa).

Residue D89 is the Proton acceptor of the active site. Residues 89 to 93 (DSGGF), D143, Q187, and G214 each bind substrate. The RNA binding stretch occupies residues 245-251 (GVGKPED). Catalysis depends on D264, which acts as the Nucleophile. The interval 269–273 (TRNAR) is RNA binding; important for wobble base 34 recognition. Positions 302, 304, 307, and 333 each coordinate Zn(2+).

Belongs to the queuine tRNA-ribosyltransferase family. As to quaternary structure, homodimer. Within each dimer, one monomer is responsible for RNA recognition and catalysis, while the other monomer binds to the replacement base PreQ1. Requires Zn(2+) as cofactor.

The enzyme catalyses 7-aminomethyl-7-carbaguanine + guanosine(34) in tRNA = 7-aminomethyl-7-carbaguanosine(34) in tRNA + guanine. Its pathway is tRNA modification; tRNA-queuosine biosynthesis. In terms of biological role, catalyzes the base-exchange of a guanine (G) residue with the queuine precursor 7-aminomethyl-7-deazaguanine (PreQ1) at position 34 (anticodon wobble position) in tRNAs with GU(N) anticodons (tRNA-Asp, -Asn, -His and -Tyr). Catalysis occurs through a double-displacement mechanism. The nucleophile active site attacks the C1' of nucleotide 34 to detach the guanine base from the RNA, forming a covalent enzyme-RNA intermediate. The proton acceptor active site deprotonates the incoming PreQ1, allowing a nucleophilic attack on the C1' of the ribose to form the product. After dissociation, two additional enzymatic reactions on the tRNA convert PreQ1 to queuine (Q), resulting in the hypermodified nucleoside queuosine (7-(((4,5-cis-dihydroxy-2-cyclopenten-1-yl)amino)methyl)-7-deazaguanosine). The polypeptide is Queuine tRNA-ribosyltransferase (Tolumonas auensis (strain DSM 9187 / NBRC 110442 / TA 4)).